The primary structure comprises 67 residues: Large ribosomal subunit protein bL32 (67 aa).

Positions 1–44 (MAVQQNRKSPSKRDMRRSHDALGFSTLSTDSKSGERHRRHHVTK) are disordered. A compositionally biased stretch (basic and acidic residues) spans 11 to 20 (SKRDMRRSHD).

Belongs to the bacterial ribosomal protein bL32 family.

The chain is Large ribosomal subunit protein bL32 from Dichelobacter nodosus (strain VCS1703A).